Here is a 721-residue protein sequence, read N- to C-terminus: Fatty acid oxidation complex subunit alpha (721 aa).

The segment at M1 to A190 is enoyl-CoA hydratase/isomerase. Substrate is bound at residue D297. The interval K312–E721 is 3-hydroxyacyl-CoA dehydrogenase. NAD(+)-binding positions include M325, D344, V401–E403, K408, and S430. The For 3-hydroxyacyl-CoA dehydrogenase activity role is filled by H451. Residue N454 coordinates NAD(+). 2 residues coordinate substrate: N501 and Y660.

This sequence in the N-terminal section; belongs to the enoyl-CoA hydratase/isomerase family. The protein in the C-terminal section; belongs to the 3-hydroxyacyl-CoA dehydrogenase family. As to quaternary structure, heterotetramer of two alpha chains (FadB) and two beta chains (FadA).

The enzyme catalyses a (3S)-3-hydroxyacyl-CoA + NAD(+) = a 3-oxoacyl-CoA + NADH + H(+). It catalyses the reaction a (3S)-3-hydroxyacyl-CoA = a (2E)-enoyl-CoA + H2O. It carries out the reaction a 4-saturated-(3S)-3-hydroxyacyl-CoA = a (3E)-enoyl-CoA + H2O. The catalysed reaction is (3S)-3-hydroxybutanoyl-CoA = (3R)-3-hydroxybutanoyl-CoA. The enzyme catalyses a (3Z)-enoyl-CoA = a 4-saturated (2E)-enoyl-CoA. It catalyses the reaction a (3E)-enoyl-CoA = a 4-saturated (2E)-enoyl-CoA. Its pathway is lipid metabolism; fatty acid beta-oxidation. In terms of biological role, involved in the aerobic and anaerobic degradation of long-chain fatty acids via beta-oxidation cycle. Catalyzes the formation of 3-oxoacyl-CoA from enoyl-CoA via L-3-hydroxyacyl-CoA. It can also use D-3-hydroxyacyl-CoA and cis-3-enoyl-CoA as substrate. In Pseudomonas savastanoi pv. phaseolicola (strain 1448A / Race 6) (Pseudomonas syringae pv. phaseolicola (strain 1448A / Race 6)), this protein is Fatty acid oxidation complex subunit alpha.